We begin with the raw amino-acid sequence, 249 residues long: Glutathione S-transferase S1 (249 aa).

Residues 1 to 38 (MADEAQAPPAEGAPPAEGEAPPPAEGAEGAVEGGEAAP) are compositionally biased toward low complexity. Positions 1 to 42 (MADEAQAPPAEGAPPAEGEAPPPAEGAEGAVEGGEAAPPAEP) are disordered. A GST N-terminal domain is found at 48–125 (HSYTLFYFNV…FLAKTVGLCG (78 aa)). Glutathione-binding positions include Tyr-54, Trp-85, Lys-89, 96 to 97 (QM), and 109 to 110 (QS). Residues 127 to 249 (TPWEDLQIDI…WIEKRPVTEV (123 aa)) enclose the GST C-terminal domain.

It belongs to the GST superfamily. Sigma family. Homodimer.

It catalyses the reaction RX + glutathione = an S-substituted glutathione + a halide anion + H(+). Functionally, conjugation of reduced glutathione to a wide number of exogenous and endogenous hydrophobic electrophiles. May be involved in the detoxification of metabolites produced during cellular division and morphogenesis. In Drosophila melanogaster (Fruit fly), this protein is Glutathione S-transferase S1.